Consider the following 503-residue polypeptide: Probable cytochrome P450 303a1 (503 aa).

C448 lines the heme pocket.

Belongs to the cytochrome P450 family. Heme is required as a cofactor.

It localises to the endoplasmic reticulum membrane. The protein localises to the microsome membrane. May be involved in the metabolism of insect hormones and in the breakdown of synthetic insecticides. The chain is Probable cytochrome P450 303a1 (Cyp303a1) from Drosophila melanogaster (Fruit fly).